Reading from the N-terminus, the 567-residue chain is Oxygen-dependent choline dehydrogenase (567 aa).

6-35 is a binding site for FAD; sequence DYIIVGAGSAGNTLATRLTEDEGVTVLLLE. The tract at residues 182–203 is disordered; the sequence is QQEGFGPMDRTVTPKGRRASTA. His475 (proton acceptor) is an active-site residue.

This sequence belongs to the GMC oxidoreductase family. FAD serves as cofactor.

The catalysed reaction is choline + A = betaine aldehyde + AH2. It carries out the reaction betaine aldehyde + NAD(+) + H2O = glycine betaine + NADH + 2 H(+). It functions in the pathway amine and polyamine biosynthesis; betaine biosynthesis via choline pathway; betaine aldehyde from choline (cytochrome c reductase route): step 1/1. Functionally, involved in the biosynthesis of the osmoprotectant glycine betaine. Catalyzes the oxidation of choline to betaine aldehyde and betaine aldehyde to glycine betaine at the same rate. This Pseudomonas fluorescens (strain ATCC BAA-477 / NRRL B-23932 / Pf-5) protein is Oxygen-dependent choline dehydrogenase.